The following is a 640-amino-acid chain: 1-deoxy-D-xylulose-5-phosphate synthase (640 aa).

Thiamine diphosphate is bound by residues His79 and 120 to 122 (GHS). Asp151 serves as a coordination point for Mg(2+). Thiamine diphosphate contacts are provided by residues 152–153 (GG), Asn180, Tyr288, and Glu372. Asn180 lines the Mg(2+) pocket.

This sequence belongs to the transketolase family. DXPS subfamily. In terms of assembly, homodimer. Mg(2+) serves as cofactor. Thiamine diphosphate is required as a cofactor.

It catalyses the reaction D-glyceraldehyde 3-phosphate + pyruvate + H(+) = 1-deoxy-D-xylulose 5-phosphate + CO2. The protein operates within metabolic intermediate biosynthesis; 1-deoxy-D-xylulose 5-phosphate biosynthesis; 1-deoxy-D-xylulose 5-phosphate from D-glyceraldehyde 3-phosphate and pyruvate: step 1/1. In terms of biological role, catalyzes the acyloin condensation reaction between C atoms 2 and 3 of pyruvate and glyceraldehyde 3-phosphate to yield 1-deoxy-D-xylulose-5-phosphate (DXP). The sequence is that of 1-deoxy-D-xylulose-5-phosphate synthase from Nitrosococcus oceani (strain ATCC 19707 / BCRC 17464 / JCM 30415 / NCIMB 11848 / C-107).